We begin with the raw amino-acid sequence, 601 residues long: Elongation factor 4 (601 aa).

Residues 6–188 (QFIRNFSIIA…AITKEIPAPK (183 aa)) enclose the tr-type G domain. Residues 18–23 (DHGKST) and 135–138 (NKID) each bind GTP.

The protein belongs to the TRAFAC class translation factor GTPase superfamily. Classic translation factor GTPase family. LepA subfamily.

The protein resides in the cell inner membrane. It catalyses the reaction GTP + H2O = GDP + phosphate + H(+). In terms of biological role, required for accurate and efficient protein synthesis under certain stress conditions. May act as a fidelity factor of the translation reaction, by catalyzing a one-codon backward translocation of tRNAs on improperly translocated ribosomes. Back-translocation proceeds from a post-translocation (POST) complex to a pre-translocation (PRE) complex, thus giving elongation factor G a second chance to translocate the tRNAs correctly. Binds to ribosomes in a GTP-dependent manner. The sequence is that of Elongation factor 4 from Leptospira borgpetersenii serovar Hardjo-bovis (strain JB197).